The primary structure comprises 35 residues: Photosystem II reaction center protein Psb30 (35 aa).

The helical transmembrane segment at 7–27 (VFVQLLLLALIVLAGPAVILL) threads the bilayer.

Belongs to the Psb30/Ycf12 family. In terms of assembly, PSII is composed of 1 copy each of membrane proteins PsbA, PsbB, PsbC, PsbD, PsbE, PsbF, PsbH, PsbI, PsbJ, PsbK, PsbL, PsbM, PsbT, PsbX, PsbY, PsbZ, Psb30/Ycf12, peripheral proteins PsbO, CyanoQ (PsbQ), PsbU, PsbV and a large number of cofactors. It forms dimeric complexes.

The protein resides in the cellular thylakoid membrane. Functionally, a core subunit of photosystem II (PSII), probably helps stabilize the reaction center. In Synechococcus sp. (strain JA-3-3Ab) (Cyanobacteria bacterium Yellowstone A-Prime), this protein is Photosystem II reaction center protein Psb30.